We begin with the raw amino-acid sequence, 119 residues long: Hydrogenase maturation factor HypA (119 aa).

His-2 lines the Ni(2+) pocket. Cys-73, Cys-76, Cys-89, and Cys-92 together coordinate Zn(2+).

The protein belongs to the HypA/HybF family.

In terms of biological role, involved in the maturation of [NiFe] hydrogenases. Required for nickel insertion into the metal center of the hydrogenase. This is Hydrogenase maturation factor HypA from Dehalococcoides mccartyi (strain ATCC BAA-2266 / KCTC 15142 / 195) (Dehalococcoides ethenogenes (strain 195)).